The chain runs to 188 residues: dCTP deaminase (188 aa).

DCTP contacts are provided by residues 111-116, 135-137, Q156, Y170, and Q180; these read KSTYAR and TLE. The active-site Proton donor/acceptor is the E137.

It belongs to the dCTP deaminase family. As to quaternary structure, homotrimer.

It carries out the reaction dCTP + H2O + H(+) = dUTP + NH4(+). It functions in the pathway pyrimidine metabolism; dUMP biosynthesis; dUMP from dCTP (dUTP route): step 1/2. Catalyzes the deamination of dCTP to dUTP. This Pseudomonas aeruginosa (strain UCBPP-PA14) protein is dCTP deaminase.